Consider the following 365-residue polypeptide: tRNA 2-selenouridine synthase (365 aa).

Residues 15 to 138 (FIAGQPLIDL…MRQYLIGVIE (124 aa)) form the Rhodanese domain. Residue Cys98 is the S-selanylcysteine intermediate of the active site.

It belongs to the SelU family. Monomer.

It carries out the reaction 5-methylaminomethyl-2-thiouridine(34) in tRNA + selenophosphate + (2E)-geranyl diphosphate + H2O + H(+) = 5-methylaminomethyl-2-selenouridine(34) in tRNA + (2E)-thiogeraniol + phosphate + diphosphate. It catalyses the reaction 5-methylaminomethyl-2-thiouridine(34) in tRNA + (2E)-geranyl diphosphate = 5-methylaminomethyl-S-(2E)-geranyl-thiouridine(34) in tRNA + diphosphate. The enzyme catalyses 5-methylaminomethyl-S-(2E)-geranyl-thiouridine(34) in tRNA + selenophosphate + H(+) = 5-methylaminomethyl-2-(Se-phospho)selenouridine(34) in tRNA + (2E)-thiogeraniol. The catalysed reaction is 5-methylaminomethyl-2-(Se-phospho)selenouridine(34) in tRNA + H2O = 5-methylaminomethyl-2-selenouridine(34) in tRNA + phosphate. Functionally, involved in the post-transcriptional modification of the uridine at the wobble position (U34) of tRNA(Lys), tRNA(Glu) and tRNA(Gln). Catalyzes the conversion of 2-thiouridine (S2U-RNA) to 2-selenouridine (Se2U-RNA). Acts in a two-step process involving geranylation of 2-thiouridine (S2U) to S-geranyl-2-thiouridine (geS2U) and subsequent selenation of the latter derivative to 2-selenouridine (Se2U) in the tRNA chain. This chain is tRNA 2-selenouridine synthase, found in Shewanella sp. (strain ANA-3).